The primary structure comprises 126 residues: Prefoldin subunit beta (126 aa).

Belongs to the prefoldin subunit beta family. Heterohexamer of two alpha and four beta subunits.

The protein resides in the cytoplasm. Molecular chaperone capable of stabilizing a range of proteins. Seems to fulfill an ATP-independent, HSP70-like function in archaeal de novo protein folding. The polypeptide is Prefoldin subunit beta (Pyrobaculum neutrophilum (strain DSM 2338 / JCM 9278 / NBRC 100436 / V24Sta) (Thermoproteus neutrophilus)).